Reading from the N-terminus, the 248-residue chain is Probable transcriptional regulatory protein R02753 (248 aa).

The protein belongs to the TACO1 family.

The protein resides in the cytoplasm. This chain is Probable transcriptional regulatory protein R02753, found in Rhizobium meliloti (strain 1021) (Ensifer meliloti).